We begin with the raw amino-acid sequence, 598 residues long: Nuclear receptor subfamily 4 group A member 2 (598 aa).

Positions 1–22 (MPCVQAQYGSSPQGASPASQSY) are disordered. Residues 8-22 (YGSSPQGASPASQSY) are compositionally biased toward low complexity. Positions 260 to 335 (EGLCAVCGDN…VGMVKEVVRT (76 aa)) form a DNA-binding region, nuclear receptor. 2 NR C4-type zinc fingers span residues 263–283 (CAVC…CEGC) and 299–318 (CLAN…CQYC). The Bipartite nuclear localization signal (NLS1) motif lies at 287 to 314 (FKRTVQKNAKYVCLANKNCPVDKRRRNR). The segment at 337–361 (SLKGRRGRLPSKPKSPQEPSPPSPP) is disordered. Positions 338–350 (LKGRRGRLPSKPK) match the Nuclear localization signal (NLS1) motif. Positions 352–361 (PQEPSPPSPP) are enriched in pro residues. In terms of domain architecture, NR LBD spans 360-595 (PPVSLISALV…AIIDKLFLDT (236 aa)). The short motif at 443 to 452 (FLELFVLRLA) is the nuclear export sequence (NES1) element. The nuclear export sequence (NES2) signature appears at 568–577 (QGLQRIFYLK).

This sequence belongs to the nuclear hormone receptor family. NR4 subfamily. As to quaternary structure, interacts with SFPQ, NCOR2, SIN3A and HADC1. The interaction with NCOR2 increases in the absence of PITX3. Interacts with PER2.

It is found in the cytoplasm. The protein resides in the nucleus. Functionally, transcriptional regulator which is important for the differentiation and maintenance of meso-diencephalic dopaminergic (mdDA) neurons during development. It is crucial for expression of a set of genes such as SLC6A3, SLC18A2, TH and DRD2 which are essential for development of mdDA neurons. The chain is Nuclear receptor subfamily 4 group A member 2 (NR4A2) from Bos taurus (Bovine).